The following is a 207-amino-acid chain: uncharacterized protein (207 aa).

5 helical membrane-spanning segments follow: residues 28–48 (IAVL…IVFV), 59–79 (EGFI…FLIV), 112–132 (MFLL…VAGL), 140–160 (FILA…FIGY), and 165–185 (LITQ…LWYV).

Its subcellular location is the cell membrane. This is an uncharacterized protein from Bacillus subtilis (strain 168).